Here is a 501-residue protein sequence, read N- to C-terminus: Atypical kinase COQ8, mitochondrial (501 aa).

The N-terminal 29 residues, 1 to 29 (MVTNMVKLRNLRRLYCSSRLLRTIQNGRI), are a transit peptide targeting the mitochondrion. A disordered region spans residues 41 to 69 (YTTKSAKEGEENVERKHEEEKKDTLKSSS). Positions 45–65 (SAKEGEENVERKHEEEKKDTL) are enriched in basic and acidic residues. The KxGQ motif motif lies at 134–137 (KIGQ). Residues 188–501 (KFDKIPMAAA…LFKEIFAYKV (314 aa)) form the Protein kinase domain. Positions 195-198 (AAAS) match the AAAS motif motif. Residues serine 198, lysine 216, and 303 to 306 (MTRM) contribute to the ATP site. The active-site Proton acceptor is the aspartate 346. The ATP site is built by asparagine 351 and aspartate 365.

It belongs to the protein kinase superfamily. ADCK protein kinase family. As to quaternary structure, forms homopolymers. Predominantly associated with a complex of about 500 kDa.

It localises to the mitochondrion inner membrane. It functions in the pathway cofactor biosynthesis; ubiquinone biosynthesis. Functionally, atypical kinase involved in the biosynthesis of coenzyme Q, also named ubiquinone, an essential lipid-soluble electron transporter for aerobic cellular respiration. Its substrate specificity is still unclear: may act as a protein kinase that mediates phosphorylation of COQ3, COQ5 and/or COQ7. According to other reports, acts as a small molecule kinase, possibly a lipid kinase that phosphorylates a prenyl lipid in the ubiquinone biosynthesis pathway, as suggested by its ability to bind coenzyme Q lipid intermediates. The chain is Atypical kinase COQ8, mitochondrial (COQ8) from Saccharomyces cerevisiae (strain ATCC 204508 / S288c) (Baker's yeast).